The primary structure comprises 275 residues: Vitamin B12-binding protein (275 aa).

An N-terminal signal peptide occupies residues 1 to 19 (MMNKLCFALPLIFSDASFA). The 248-residue stretch at 25-272 (RIISLAPHST…EVCEHFETVR (248 aa)) folds into the Fe/B12 periplasmic-binding domain. A disulfide bridge links cysteine 185 with cysteine 265.

This sequence belongs to the BtuF family. In terms of assembly, the complex is composed of two ATP-binding proteins (BtuD), two transmembrane proteins (BtuC) and a solute-binding protein (BtuF).

It localises to the periplasm. In terms of biological role, part of the ABC transporter complex BtuCDF involved in vitamin B12 import. Binds vitamin B12 and delivers it to the periplasmic surface of BtuC. This Vibrio campbellii (strain ATCC BAA-1116) protein is Vitamin B12-binding protein.